The chain runs to 182 residues: Transmembrane and coiled-coil domain-containing protein 2 (182 aa).

The helical transmembrane segment at 51 to 71 (VQIILRISFLILLGIGIYALW) threads the bilayer. Residues 124–151 (GLQEKILKKLKTVENKMKNLEGIIVAQK) adopt a coiled-coil conformation.

It is found in the membrane. This chain is Transmembrane and coiled-coil domain-containing protein 2 (TMCO2), found in Homo sapiens (Human).